The following is a 234-amino-acid chain: MQHFWVVGTDTDVGKTFVTTLLMRNLQKQGVRVTPYKPVQTGEVYDGEQAYYFDTAMYEKYSLQLLDRENLNGYSFKEAASPHFAAQLEGQQIDTQQLLKQMQLLQQTWDVVICEGAGGLFVPLDACGETTLLDVIVESKLPVVVVTRTALGTINHTLLTLEALTTRKIEVLGLVFNGDMGSRMEQDNIQTILQYYTLPYMTIPKLEELSDINEYAITGTSLFERLIRRETSIN.

12-17 contacts ATP; the sequence is DVGKTF. Position 16 (Thr-16) interacts with Mg(2+). Lys-37 is an active-site residue. Thr-41 is a binding site for substrate. Residues Asp-54 and 115 to 118 each bind ATP; that span reads EGAG. Residues Asp-54 and Glu-115 each coordinate Mg(2+).

The protein belongs to the dethiobiotin synthetase family. Homodimer. Mg(2+) serves as cofactor.

It is found in the cytoplasm. The catalysed reaction is (7R,8S)-7,8-diammoniononanoate + CO2 + ATP = (4R,5S)-dethiobiotin + ADP + phosphate + 3 H(+). It participates in cofactor biosynthesis; biotin biosynthesis; biotin from 7,8-diaminononanoate: step 1/2. Functionally, catalyzes a mechanistically unusual reaction, the ATP-dependent insertion of CO2 between the N7 and N8 nitrogen atoms of 7,8-diaminopelargonic acid (DAPA, also called 7,8-diammoniononanoate) to form a ureido ring. This chain is ATP-dependent dethiobiotin synthetase BioD, found in Lysinibacillus sphaericus (Bacillus sphaericus).